We begin with the raw amino-acid sequence, 419 residues long: Gustatory receptor for sugar taste 64c (419 aa).

Residues 1–15 (MQQSGQKGTRNTLQH) are Cytoplasmic-facing. Residues 16–36 (AIGPVLVIAQFFGVLPVAGVW) form a helical membrane-spanning segment. The Extracellular portion of the chain corresponds to 37–48 (PSCRPERVRFRW). Residues 49–69 (ISLSLLAALILFVFSIVDCAL) traverse the membrane as a helical segment. Residues 70-82 (SSKVVFDHGLKIY) lie on the Cytoplasmic side of the membrane. A helical membrane pass occupies residues 83-103 (TIGSLSFSVICIFCFGVFLLL). Over 104-139 (SRRWPYIIRRTAECEQIFLEPEYDCSYGRGYSSRLR) the chain is Extracellular. Residues 140–160 (LWGVCMLVAALCEHSTYVGSA) form a helical membrane-spanning segment. The Cytoplasmic portion of the chain corresponds to 161–204 (LYNNHLAIVECKLDANFWQNYFQRERQQLFLIMHFTAWWIPFIE). Residues 205–225 (WTTLSMTFVWNFVDIFLILIC) traverse the membrane as a helical segment. Topologically, residues 226 to 305 (RGMQMRFQQM…FQSKGNYADE (80 aa)) are extracellular. The helical transmembrane segment at 306–326 (LYFWFCLSYVIIRVLNMMFAA) threads the bilayer. At 327 to 377 (SSIPQEAKEISYTLYEIPTEFWCVELRRLNEIFLSDHFALSGKGYFLLTRR) the chain is on the cytoplasmic side. A helical transmembrane segment spans residues 378-398 (LIFAMAATLMVYELVLINQMA). Residues 399–419 (GSEVQKSFCEGGVGSSKSIFS) are Extracellular-facing.

The protein belongs to the insect chemoreceptor superfamily. Gustatory receptor (GR) family. Gr5a subfamily. As to expression, expressed in Gr5a-expressing sugar-sensing cells.

Its subcellular location is the cell membrane. In terms of biological role, one of the few identified sugar gustatory receptors identified so far and which promotes the starvation-induced increase of feeding motivation. The sequence is that of Gustatory receptor for sugar taste 64c (Gr64c) from Drosophila melanogaster (Fruit fly).